A 153-amino-acid polypeptide reads, in one-letter code: uncharacterized protein (153 aa).

The N-terminal stretch at 1 to 18 (MSARISKQLRLSVPPCLA) is a signal peptide. Residues Asn19 and Asn25 are each glycosylated (N-linked (GlcNAc...) asparagine). Topologically, residues 19-43 (NRTTASNSSSCVTEVEPLLQSFSST) are extracellular. The helical transmembrane segment at 44–64 (LVLIVLATVIFCLVVLSLSTF) threads the bilayer. Residues 65–153 (HMHKSKMKKR…EHLQQSVVLS (89 aa)) are Cytoplasmic-facing. A disordered region spans residues 75–115 (KIEKAQEEYERDHCSPKAERGHLHGMGRGGTHGSPTSPTIQ). Positions 77-96 (EKAQEEYERDHCSPKAERGH) are enriched in basic and acidic residues.

The protein resides in the membrane. This is an uncharacterized protein from Xenopus tropicalis (Western clawed frog).